The primary structure comprises 2000 residues: E3 ubiquitin-protein ligase TTC3 (2000 aa).

Positions 20-249 (MDDFAEGGLS…RHSCMQCVKQ (230 aa)) are interaction with POLG. TPR repeat units lie at residues 250-283 (GELM…RPEN) and 284-317 (HLLY…KNTW). Serine 397 carries the phosphoserine modification. The tract at residues 442–478 (CDCHPEFLPPPSQPPRHKGKQKSRNNESEKPSSNSQV) is disordered. TPR repeat units follow at residues 556–592 (VLVV…YPNE) and 596–629 (CLAY…ICRL). A disordered region spans residues 804–828 (AQERMEEDLRESNPPKPEEPEETVE). A Phosphoserine modification is found at serine 1029. Disordered regions lie at residues 1041 to 1087 (NKGK…GPFA), 1233 to 1308 (FQPD…PEDA), 1423 to 1448 (QSST…SSDS), 1806 to 1839 (LEVK…QSQK), and 1894 to 1947 (EEQK…VPAP). A compositionally biased stretch (polar residues) spans 1059-1070 (GTASVTPSSETV). At serine 1080 the chain carries Phosphoserine. Low complexity predominate over residues 1268–1277 (DSDSSSGSAS). Residues 1829–1839 (GQATRSSQSQK) are compositionally biased toward polar residues. Basic and acidic residues predominate over residues 1894 to 1911 (EEQKKKKPNPGKDKKTSE). Over residues 1912–1934 (AHPAASVSKSSPSPPLAAAGPSA) the composition is skewed to low complexity. The RING-type; atypical zinc-finger motif lies at 1952–1991 (CQICHEIFKSKNMRVLKCGHKFHKGCFKQWLKGQSTCPTC).

As to quaternary structure, interacts (when phosphorylated on Ser-397) with AKT1, AKT2 and AKT3 (when phosphorylated). Interacts with CIT. Interacts with POLG. Interacts with HSP70. Interacts with SMURF2. In terms of processing, phosphorylation on Ser-397 by Akt is required for ubiquitin ligase activity. Post-translationally, proteolytically cleaved into differently sized N- and C-terminal fragments.

It localises to the nucleus. The protein resides in the cytoplasm. It is found in the golgi apparatus. It carries out the reaction S-ubiquitinyl-[E2 ubiquitin-conjugating enzyme]-L-cysteine + [acceptor protein]-L-lysine = [E2 ubiquitin-conjugating enzyme]-L-cysteine + N(6)-ubiquitinyl-[acceptor protein]-L-lysine.. The protein operates within protein modification; protein ubiquitination. Its function is as follows. E3 ubiquitin-protein ligase which catalyzes the formation of 'Lys-48'-polyubiquitin chains. Mediates the ubiquitination and subsequent degradation of phosphorylated Akt (AKT1, AKT2 and AKT3) in the nucleus. Acts as a terminal regulator of Akt signaling after activation; its phosphorylation by Akt, which is a prerequisite for ubiquitin ligase activity, suggests the existence of a regulation mechanism required to control Akt levels after activation. Positively regulates TGFB1-induced epithelial-mesenchymal transition and myofibroblast differentiation by mediating the ubiquitination and subsequent degradation of SMURF2. Regulates neuronal differentiation by regulating actin remodeling and Golgi organization via a signaling cascade involving RHOA, CIT and ROCK. Inhibits cell proliferation. This is E3 ubiquitin-protein ligase TTC3 from Rattus norvegicus (Rat).